Consider the following 377-residue polypeptide: Nucleoside diphosphate kinase homolog 7 (377 aa).

Positions 3–91 (HSERFVFIAE…YTARQLGSKK (89 aa)) constitute a DM10 domain.

This sequence belongs to the NDK family. In terms of assembly, component of sperm flagellar doublet microtubules. Component of the gamma-tubulin ring complex. In terms of tissue distribution, expressed in trachea multiciliated cells.

It localises to the cytoplasm. The protein localises to the cytoskeleton. It is found in the microtubule organizing center. Its subcellular location is the centrosome. The protein resides in the nucleus. It localises to the spindle. The protein localises to the cilium axoneme. It is found in the flagellum axoneme. Its subcellular location is the cell projection. The protein resides in the cilium. Possesses an intrinsic kinase activity. Displays 3'-5' exonuclease activity with a preference for single-stranded DNA. Does not seem to have nucleoside diphosphate kinase activity. Functional component of the gamma-tubulin ring complex, implicated in the regulation of the microtubule-nucleating activity of the gamma-tubulin ring complex in centrosomes, in a kinase activity-dependent manner. Part of the dynein-decorated doublet microtubules (DMTs) in cilia axoneme, which is required for motile cilia beating. This Bos taurus (Bovine) protein is Nucleoside diphosphate kinase homolog 7 (NME7).